Consider the following 3336-residue polypeptide: Pericentrin (3336 aa).

2 disordered regions span residues 1–71 and 81–100; these read MEVE…DICK and GAGG…KRED. Basic and acidic residues predominate over residues 27–37; sequence TKGDSSHSEKK. Phosphoserine is present on S44. Phosphoserine is present on S188. T191 carries the post-translational modification Phosphothreonine. Residues 258-553 are a coiled coil; that stretch reads HTAQLELTQA…RLQGAREDAL (296 aa). Positions 569–589 are disordered; that stretch reads KPEKGRKDHVDELEPERHKES. S610 and S682 each carry phosphoserine. Coiled-coil stretches lie at residues 675-835 and 1010-1146; these read TEHK…DALH and TILT…MLKA. The residue at position 1245 (S1245) is a Phosphoserine. Positions 1299–1949 form a coiled coil; that stretch reads NEETAQVVRK…FLRCQVELDR (651 aa). Residues 1619 to 1638 form a disordered region; the sequence is TLDAGRCPEPPSGSPPEGPE. The span at 1626 to 1636 shows a compositional bias: pro residues; sequence PEPPSGSPPEG. Phosphoserine occurs at positions 1653 and 1712. Residues 1954 to 1974 form a disordered region; sequence RATAHTRVPGAHPQPRMDGGA. S2044 is modified (phosphoserine). Positions 2064–2082 form a coiled coil; sequence VDLVAQVKQLQEKLNRLLY. The segment at 2168-2214 is disordered; the sequence is SLIPDEMPDSPIQEKSECQDMSLSSPTSVLGGSRHQSHTAEAGPRKS. S2177, S2192, S2225, S2226, and S2327 each carry phosphoserine. Residues 2186–2197 are compositionally biased toward polar residues; the sequence is QDMSLSSPTSVL. The interval 2318-2374 is disordered; sequence SFDSQETLSSPPPGLEGKADRSEKSDGSGFGARLSPGSGGPEAQTAGPVTPASISGR. A compositionally biased stretch (basic and acidic residues) spans 2334 to 2343; it reads GKADRSEKSD. 4 positions are modified to phosphoserine: S2352, S2355, S2477, and S2486. Residues 2536 to 3086 are a coiled coil; that stretch reads QEKLQHLRTA…EKLLKHHLQK (551 aa). Disordered regions lie at residues 2875-2910 and 3084-3126; these read LEQS…WRKW and LQKG…EEAH. 2 stretches are compositionally biased toward basic and acidic residues: residues 2876 to 2896 and 3092 to 3102; these read EQSH…RSAE and RSERSAWKPDE. Residues 2983-3246 are interaction with NEK2; it reads LSAARLLTSF…ARQPQSPPRT (264 aa). The segment at 3195 to 3208 is calmodulin-binding; that stretch reads RFRTAVRVVIAILR. The interval 3224 to 3300 is disordered; the sequence is ALAQGKAPRP…RSLTASQDPE (77 aa). Residues 3226–3240 show a composition bias toward low complexity; that stretch reads AQGKAPRPGPRARQP. Positions 3283 to 3297 are enriched in polar residues; it reads PSPNSRLERSLTASQ. A Phosphoserine modification is found at S3302.

As to quaternary structure, interacts with CHD3. Interacts with CHD4; the interaction regulates centrosome integrity. Interacts with DISC1 and PCM1. Binds calmodulin. Interacts with CDK5RAP2; the interaction is leading to centrosomal localization of PCNT and CDK5RAP2. Interacts with isoform 1 of NEK2. Interacts with CEP131. Interacts with CCDC13. Interacts with CEP68. Interacts with ATF5; the ATF5:PCNT:polyglutamylated tubulin (PGT) tripartite unites the mother centriole and the pericentriolar material (PCM) in the centrosome. Cleaved during mitotis which leads to removal of CDK5RAP2 from the centrosome and promotes centriole disengagement and subsequent centriole separation. The C-terminal fragment is rapidly degraded following cleavage. Post-translationally, ubiquitinated by TRIM43; leading to proteasomal degradation. In terms of tissue distribution, expressed in all tissues tested, including placenta, liver, kidney and thymus.

The protein localises to the cytoplasm. It localises to the cytoskeleton. Its subcellular location is the microtubule organizing center. It is found in the centrosome. Integral component of the filamentous matrix of the centrosome involved in the initial establishment of organized microtubule arrays in both mitosis and meiosis. Plays a role, together with DISC1, in the microtubule network formation. Is an integral component of the pericentriolar material (PCM). May play an important role in preventing premature centrosome splitting during interphase by inhibiting NEK2 kinase activity at the centrosome. In Homo sapiens (Human), this protein is Pericentrin (PCNT).